Reading from the N-terminus, the 421-residue chain is Ankyrin repeat and SOCS box protein 6 (421 aa).

ANK repeat units follow at residues 67 to 97 (EGVSNALLKMAELGLTRAADVLLRHGANLNF), 102 to 131 (TYYTALHIAVLRNQPDMVELLVHHGADVNR), 136 to 166 (HESSPLDLASEEPERLPCLQRLLDLGADVNA), 170 to 205 (HGKTALLHALASSDGVQIHNTENIRLLLEGGADVKA), 226 to 255 (GGDKEEAQMINRFCFQVTRLLLAHGADPSE), and 260 to 289 (ESLTHICLKSFKLHFPLLRFLLESGAAYNC). The 56-residue stretch at 360-415 (ALHFSLRQLESYPPPLKHLCRVAIRLYLQPWPVDVKVKALPLPDRLKWYLLSEHSG) folds into the SOCS box domain.

The protein belongs to the ankyrin SOCS box (ASB) family. As to quaternary structure, binds APS. Identified in a complex with ELOB and ELOC. Interacts with CUL5 and RNF7. Interacts with SQSTM1. Post-translationally, ubiquitinated by RNF41; leading to proteasomal degradation.

The protein resides in the cytoplasm. Its pathway is protein modification; protein ubiquitination. Probable substrate-recognition component of a SCF-like ECS (Elongin-Cullin-SOCS-box protein) E3 ubiquitin-protein ligase complex which mediates the ubiquitination and subsequent proteasomal degradation of target proteins. May play a role in the regulation of cell proliferation and autophagy by promoting the ubiquitination and degradation of SQSTM1. The polypeptide is Ankyrin repeat and SOCS box protein 6 (ASB6) (Homo sapiens (Human)).